The primary structure comprises 83 residues: Exodeoxyribonuclease 7 small subunit (83 aa).

It belongs to the XseB family. Heterooligomer composed of large and small subunits.

The protein localises to the cytoplasm. The enzyme catalyses Exonucleolytic cleavage in either 5'- to 3'- or 3'- to 5'-direction to yield nucleoside 5'-phosphates.. In terms of biological role, bidirectionally degrades single-stranded DNA into large acid-insoluble oligonucleotides, which are then degraded further into small acid-soluble oligonucleotides. The chain is Exodeoxyribonuclease 7 small subunit from Nitrobacter winogradskyi (strain ATCC 25391 / DSM 10237 / CIP 104748 / NCIMB 11846 / Nb-255).